A 70-amino-acid chain; its full sequence is Protein SlyX homolog (70 aa).

This sequence belongs to the SlyX family.

The sequence is that of Protein SlyX homolog from Shewanella loihica (strain ATCC BAA-1088 / PV-4).